We begin with the raw amino-acid sequence, 810 residues long: MQFPESWLRTFVDPQLTTDELSHALTMAGLEVESLRPAAPPTEKIVVGRVLEVVKHPDADKLNVCQVDAGTGATLQIVCGAPNVAPGIKVPVALVGAKLPPAEEGGAPFAIKLSKLRGVESQGMLCSARELKLSEDHSGLMILPEGTPVGQDIREALNLDDTVFEIKLTPNKADCLSVFGIARETAAITGAPLAAPDIRPVLAELTETLPVKISAPDLCGRFSGRVIRGVNARAKTPHWMVERLERAGQRSVSALVDISNYVMFELGRPSHVFDLDKIHGGIDVRWGKRGESLKLLNGNTIELDETVGVISDGAQVESLAGIMGGDSTAVTLDTTNIYLEAAFWWPDSIRGRARKYNFSTDAAHRFERGVDYSTTVEHVERITQLILDICGGQAGPVDDQIVSLPQRAPVSMRASRANRIIGVEIGEDEIAQIFTRLGLAFERDGDVFRVTPPPHRFDIEIEEDLIEEVARIYGFEKIPARPPVAKSEMRATDETRRSVHAIRHALAARDYAETVNFSFVDAEWERDFAGNDNPVRLLNPIASQLSVMRTTLFGSLVGVLRHNLNRRAERVRVFEAGRVFVADPSVKAGELAVEGYAQPKRIGALAYGPVVEEQWGTATRQVDYFDVKGDLEALLAPVPARFVKAEHPALHPGRSARIEVDGHAVGWIGELHPRLMQKYELPHAPVMFEIDTDALVARALPAPSEVSKFPPVRRDIAVVVDQKVEVQALFDEMKKALADDACKFVQRVALFDEFRAKSNTSGGLSAHEKSLAFRVTLQDAAGTLQDETVDQAIQTLVDRMARVYGARLRG.

Positions 39-154 constitute a tRNA-binding domain; it reads APPTEKIVVG…EGTPVGQDIR (116 aa). The region spanning 405–480 is the B5 domain; sequence PQRAPVSMRA…RIYGFEKIPA (76 aa). Mg(2+) is bound by residues aspartate 458, aspartate 464, glutamate 467, and glutamate 468. Residues 707 to 809 form the FDX-ACB domain; that stretch reads SKFPPVRRDI…MARVYGARLR (103 aa).

Belongs to the phenylalanyl-tRNA synthetase beta subunit family. Type 1 subfamily. As to quaternary structure, tetramer of two alpha and two beta subunits. Mg(2+) is required as a cofactor.

It is found in the cytoplasm. It carries out the reaction tRNA(Phe) + L-phenylalanine + ATP = L-phenylalanyl-tRNA(Phe) + AMP + diphosphate + H(+). This chain is Phenylalanine--tRNA ligase beta subunit, found in Burkholderia mallei (strain ATCC 23344).